Consider the following 211-residue polypeptide: MYQPDFPPVPFRSGLYPVVDSVQWIERLLDAGVRTLQLRIKDRRDEEVEADVVAAIALGRRYNARLFINDYWRLAIKHQAYGVHLGQEDLQATDLNAIRAAGLRLGVSTHDDMEIDVALAARPSYIALGHVFPTQTKQMPSAPQGLEQLARHVERLADYPTVAIGGISLARAPAVIATGVGSIAVVSAITQAADWRLATAQLLEIAGVGDE.

4-amino-2-methyl-5-(diphosphooxymethyl)pyrimidine is bound by residues 37–41 and N69; that span reads QLRIK. Mg(2+) is bound by residues D70 and D89. S108 is a 4-amino-2-methyl-5-(diphosphooxymethyl)pyrimidine binding site. 134-136 lines the 2-[(2R,5Z)-2-carboxy-4-methylthiazol-5(2H)-ylidene]ethyl phosphate pocket; the sequence is TQT. K137 lines the 4-amino-2-methyl-5-(diphosphooxymethyl)pyrimidine pocket. 2-[(2R,5Z)-2-carboxy-4-methylthiazol-5(2H)-ylidene]ethyl phosphate is bound by residues G166 and 186-187; that span reads VS.

This sequence belongs to the thiamine-phosphate synthase family. Requires Mg(2+) as cofactor.

It carries out the reaction 2-[(2R,5Z)-2-carboxy-4-methylthiazol-5(2H)-ylidene]ethyl phosphate + 4-amino-2-methyl-5-(diphosphooxymethyl)pyrimidine + 2 H(+) = thiamine phosphate + CO2 + diphosphate. It catalyses the reaction 2-(2-carboxy-4-methylthiazol-5-yl)ethyl phosphate + 4-amino-2-methyl-5-(diphosphooxymethyl)pyrimidine + 2 H(+) = thiamine phosphate + CO2 + diphosphate. The enzyme catalyses 4-methyl-5-(2-phosphooxyethyl)-thiazole + 4-amino-2-methyl-5-(diphosphooxymethyl)pyrimidine + H(+) = thiamine phosphate + diphosphate. It functions in the pathway cofactor biosynthesis; thiamine diphosphate biosynthesis; thiamine phosphate from 4-amino-2-methyl-5-diphosphomethylpyrimidine and 4-methyl-5-(2-phosphoethyl)-thiazole: step 1/1. Condenses 4-methyl-5-(beta-hydroxyethyl)thiazole monophosphate (THZ-P) and 2-methyl-4-amino-5-hydroxymethyl pyrimidine pyrophosphate (HMP-PP) to form thiamine monophosphate (TMP). This Escherichia coli O139:H28 (strain E24377A / ETEC) protein is Thiamine-phosphate synthase.